A 363-amino-acid chain; its full sequence is Cobalt-precorrin-5B C(1)-methyltransferase (363 aa).

This sequence belongs to the CbiD family.

It carries out the reaction Co-precorrin-5B + S-adenosyl-L-methionine = Co-precorrin-6A + S-adenosyl-L-homocysteine. Its pathway is cofactor biosynthesis; adenosylcobalamin biosynthesis; cob(II)yrinate a,c-diamide from sirohydrochlorin (anaerobic route): step 6/10. In terms of biological role, catalyzes the methylation of C-1 in cobalt-precorrin-5B to form cobalt-precorrin-6A. The sequence is that of Cobalt-precorrin-5B C(1)-methyltransferase from Treponema denticola (strain ATCC 35405 / DSM 14222 / CIP 103919 / JCM 8153 / KCTC 15104).